We begin with the raw amino-acid sequence, 143 residues long: Large ribosomal subunit protein uL15 (143 aa).

A disordered region spans residues 1–59; the sequence is MELNGIKPADGAKHYKRRVGRGIGSGIGKTAGRGHKGQKSRAGGYHKVGFEGGQMPMQR. Gly residues predominate over residues 21-31; sequence RGIGSGIGKTA.

Belongs to the universal ribosomal protein uL15 family. In terms of assembly, part of the 50S ribosomal subunit.

Functionally, binds to the 23S rRNA. The protein is Large ribosomal subunit protein uL15 of Albidiferax ferrireducens (strain ATCC BAA-621 / DSM 15236 / T118) (Rhodoferax ferrireducens).